We begin with the raw amino-acid sequence, 62 residues long: MKTVKELSVKEMQLTTGGKYYGNGVSCNKNGCTVDWSKAIGIIGNNAAANLTTGGAAGWNKG.

The propeptide occupies 1 to 18 (MKTVKELSVKEMQLTTGG). Cysteines 27 and 32 form a disulfide.

It localises to the secreted. Inhibits the growth of several Gram-positive bacteria, especially the food-borne pathogen L.monocytogenes, but has no effect on the growth of a number of yeasts and Gram-negative bacteria. This is Bacteriocin piscicolin-126 (pisA) from Carnobacterium maltaromaticum (Carnobacterium piscicola).